A 1485-amino-acid polypeptide reads, in one-letter code: ABC multidrug transporter I (1485 aa).

Disordered stretches follow at residues 1 to 57 and 75 to 111; these read MDEK…EEFS and KQISRASKPTGKTEDVERSDSPADSDEPWDLETALRG. The segment covering 8–24 has biased composition (polar residues); the sequence is SESSNGSDVDSLSTASA. Asn12 is a glycosylation site (N-linked (GlcNAc...) asparagine). A compositionally biased stretch (basic and acidic residues) spans 85 to 95; that stretch reads GKTEDVERSDS. N-linked (GlcNAc...) asparagine glycans are attached at residues Asn132, Asn335, and Asn451. The ABC transporter 1 domain occupies 163–411; the sequence is MHMLGYGKKG…FESLGFKERP (249 aa). 7 helical membrane passes run 522-542, 556-576, 600-620, 623-643, 664-684, 691-711, and 774-794; these read FAQTVSWITSTGVAIILGTVW, GGLLFISLLFNGFQAFSELVS, IAQILVDTTFAIARILVFSII, FMCGLVLDAGAFFTFILIIVL, YAMKFASVVITLFVLTSGYLI, EWLRWLYYINPFGLGFAALMV, and FGIMVALTVGFLTLNLYHGET. One can recognise an ABC transporter 2 domain in the interval 846–1089; that stretch reads FTWEDVCYDV…LLDYFRRNGA (244 aa). ATP is bound at residue 882-889; the sequence is GASGAGKT. 5 helical membrane passes run 1184 to 1204, 1211 to 1231, 1268 to 1288, 1299 to 1319, and 1325 to 1345; these read YGFTRLFNHVVIALVTGLAFL, ASLQYRIFVIFNVTVLPAIIL, LPYSILCAVCFFLPLYYIPGF, FLMVLITELFSVTLGQMISAL, and IASQINPPIVIIFSLFCGVAI. Residues Asn1396 and Asn1418 are each glycosylated (N-linked (GlcNAc...) asparagine). Residues 1449 to 1469 form a helical membrane-spanning segment; the sequence is LGIFLAFIGSNLIILFLAVSF.

Belongs to the ABC transporter superfamily. ABCG family. PDR (TC 3.A.1.205) subfamily.

It localises to the cell membrane. The enzyme catalyses fluconazole(in) + ATP + H2O = fluconazole(out) + ADP + phosphate + H(+). Its activity is regulated as follows. The efflux inhibitor FK506 does not impair the transport activity. Its function is as follows. ABC efflux transporter that confers resistance to fluconazole (FLC) but shows no resistance to other azoles. Is also able to transport rhodamine 6G (R-6G), a known substrate for many ABC transporters. The chain is ABC multidrug transporter I from Aspergillus fumigatus (strain ATCC MYA-4609 / CBS 101355 / FGSC A1100 / Af293) (Neosartorya fumigata).